A 256-amino-acid chain; its full sequence is Small ribosomal subunit protein eS1 (256 aa).

The segment covering Met-1 to Lys-18 has biased composition (basic residues). The disordered stretch occupies residues Met-1–Val-21. An N-acetylalanine; partial modification is found at Ala-2.

Belongs to the eukaryotic ribosomal protein eS1 family. In terms of assembly, component of the small ribosomal subunit. Mature ribosomes consist of a small (40S) and a large (60S) subunit. The 40S subunit contains about 33 different proteins and 1 molecule of RNA (18S). The 60S subunit contains about 49 different proteins and 3 molecules of RNA (25S, 5.8S and 5S).

The protein localises to the cytoplasm. In Aspergillus niger (strain ATCC MYA-4892 / CBS 513.88 / FGSC A1513), this protein is Small ribosomal subunit protein eS1 (rps1).